The following is a 554-amino-acid chain: MASSQVGDMVNGNAEPTRHLAKFPPSLWGDRFTSFTLDKQLWDKYGNEIEVLKEQVRSMVVAGGRKAAEQINLINVLERLGVSYHFEKEIEEQLEQLFAKFEDNEDYDLFTIALHFRIFRQHGYKMSCDVFNKFRDSNGEFKETVSNDVRGMLSLYEATYLKIRGEGFLDEAHAFTIAQLESLVGGPHLSSDLSEQVMHALKQSIHRGFPRLEAKHFISFYEKDAARNETLLRLAKLDFNQLQLSHREELCHIFRWWKELDLISKVPYARDRAVECFFWSTCAYYEPQHSVGRAVLTKIVLLLSVTDDTYDAYGTYDELKLYTNAVQRWDASAMDELPDYMKTLYRALLNVYDEVERDLAKQGRAYGVHHSKEAFKEIVRSYEIEAEWFKEGYVASFEEYMKNALVTSTGRLHTTSCFMGLEADVATTEAFEWILTKPKMVAASGAIGRLVDDVMSNDEEQERGHVATGLDCYMKQHGVSKQEAIVELYKMIENAWRDINEEMLKPTAISMKLLIHVLNLSRISDVVYKYVDGYTHPEIIKDHVISLFEDPIPM.

Positions 270, 307, 311, 449, and 452 each coordinate (2E,6E)-farnesyl diphosphate. Mg(2+)-binding residues include Asp307 and Asp311. Residues 307–311 (DDTYD) carry the DDXXD motif motif. Residues Asp452, Ser456, and Glu460 each contribute to the Mg(2+) site.

Belongs to the terpene synthase family. Mg(2+) is required as a cofactor. Specifically expressed in flowers.

The enzyme catalyses (2E,6E)-farnesyl diphosphate + H2O = (2E,6E)-hedycaryol + diphosphate. It participates in secondary metabolite biosynthesis; terpenoid biosynthesis. Its function is as follows. Sesquiterpene synthase that catalyzes the formation of sesquiterpenes and sesquiterpenoid alcohols. Converts farnesyl diphosphate (FPP) to hedycaryol. Hedycaryol is likely to be one of the terpenes that attract insects for pollination of Camellia brevistyla. This is Hedycaryol synthase from Camellia brevistyla.